The sequence spans 388 residues: MSEQIVTSEIITPVVPDKNGKINLLDLNRQQMREFFKELGEKPFRADQVMKWMYHYCSDNFDEMTDINKVLRGKLKEVAEIRAPEVVEEQRSSDGTIKWAIAVGDQRVETVYIPEDDRATLCVSSQVGCALECKFCSTAQQGFNRNLRVSEIIGQVWRAAKIVGAAKVTGQRPITNVVMMGMGEPLLNLTNVVPAMEIMLDDFGFGLSKRRVTLSTSGVVPALDKLGDMIDVALAISLHAPNDEIRDEIVPINRKYNIETFLDAVRRYLQKSNANQGRVTIEYVMLDHINDGTEHAHQLAELLKDTPCKINLIPWNPFPGAPYGRSSNSRIDRFSKVLMSYGFTTIVRKTRGDDIDAACGQLAGDVIDRTKRTLRKRMQGEAIDIKAV.

Glutamate 109 serves as the catalytic Proton acceptor. A Radical SAM core domain is found at 115 to 354; sequence EDDRATLCVS…TIVRKTRGDD (240 aa). A disulfide bridge connects residues cysteine 122 and cysteine 359. Cysteine 129, cysteine 133, and cysteine 136 together coordinate [4Fe-4S] cluster. S-adenosyl-L-methionine contacts are provided by residues 183–184, serine 215, 237–239, and asparagine 316; these read GE and SLH. The S-methylcysteine intermediate role is filled by cysteine 359.

The protein belongs to the radical SAM superfamily. RlmN family. It depends on [4Fe-4S] cluster as a cofactor.

It is found in the cytoplasm. The catalysed reaction is adenosine(2503) in 23S rRNA + 2 reduced [2Fe-2S]-[ferredoxin] + 2 S-adenosyl-L-methionine = 2-methyladenosine(2503) in 23S rRNA + 5'-deoxyadenosine + L-methionine + 2 oxidized [2Fe-2S]-[ferredoxin] + S-adenosyl-L-homocysteine. It catalyses the reaction adenosine(37) in tRNA + 2 reduced [2Fe-2S]-[ferredoxin] + 2 S-adenosyl-L-methionine = 2-methyladenosine(37) in tRNA + 5'-deoxyadenosine + L-methionine + 2 oxidized [2Fe-2S]-[ferredoxin] + S-adenosyl-L-homocysteine. In terms of biological role, specifically methylates position 2 of adenine 2503 in 23S rRNA and position 2 of adenine 37 in tRNAs. m2A2503 modification seems to play a crucial role in the proofreading step occurring at the peptidyl transferase center and thus would serve to optimize ribosomal fidelity. In Citrobacter koseri (strain ATCC BAA-895 / CDC 4225-83 / SGSC4696), this protein is Dual-specificity RNA methyltransferase RlmN.